The following is a 316-amino-acid chain: Ribosomal protein L11 methyltransferase (316 aa).

Positions 163, 184, 206, and 249 each coordinate S-adenosyl-L-methionine.

Belongs to the methyltransferase superfamily. PrmA family.

The protein resides in the cytoplasm. It carries out the reaction L-lysyl-[protein] + 3 S-adenosyl-L-methionine = N(6),N(6),N(6)-trimethyl-L-lysyl-[protein] + 3 S-adenosyl-L-homocysteine + 3 H(+). Its function is as follows. Methylates ribosomal protein L11. The chain is Ribosomal protein L11 methyltransferase from Pediococcus pentosaceus (strain ATCC 25745 / CCUG 21536 / LMG 10740 / 183-1w).